A 346-amino-acid polypeptide reads, in one-letter code: Phenylalanine--tRNA ligase alpha subunit (346 aa).

A Mg(2+)-binding site is contributed by glutamate 261.

The protein belongs to the class-II aminoacyl-tRNA synthetase family. Phe-tRNA synthetase alpha subunit type 1 subfamily. In terms of assembly, tetramer of two alpha and two beta subunits. Mg(2+) is required as a cofactor.

The protein resides in the cytoplasm. It catalyses the reaction tRNA(Phe) + L-phenylalanine + ATP = L-phenylalanyl-tRNA(Phe) + AMP + diphosphate + H(+). This chain is Phenylalanine--tRNA ligase alpha subunit, found in Streptococcus agalactiae serotype III (strain NEM316).